Here is a 438-residue protein sequence, read N- to C-terminus: Aspartate--tRNA(Asp) ligase (438 aa).

L-aspartate is bound at residue E170. Residues 192–195 (QLYK) are aspartate. R214 provides a ligand contact to L-aspartate. ATP contacts are provided by residues 214 to 216 (RAE), 222 to 224 (RHL), and E361. 2 residues coordinate Mg(2+): E361 and S364. Positions 364 and 368 each coordinate L-aspartate. 409–412 (GAER) serves as a coordination point for ATP.

The protein belongs to the class-II aminoacyl-tRNA synthetase family. Type 2 subfamily. In terms of assembly, homodimer. It depends on Mg(2+) as a cofactor.

It localises to the cytoplasm. It carries out the reaction tRNA(Asp) + L-aspartate + ATP = L-aspartyl-tRNA(Asp) + AMP + diphosphate. Its function is as follows. Catalyzes the attachment of L-aspartate to tRNA(Asp) in a two-step reaction: L-aspartate is first activated by ATP to form Asp-AMP and then transferred to the acceptor end of tRNA(Asp). This is Aspartate--tRNA(Asp) ligase from Pyrococcus furiosus (strain ATCC 43587 / DSM 3638 / JCM 8422 / Vc1).